A 41-amino-acid polypeptide reads, in one-letter code: Photosystem I reaction center subunit IX (41 aa).

The helical transmembrane segment at 7–27 threads the bilayer; that stretch reads YLSTAPVVAAAWFTFTAGLLI.

This sequence belongs to the PsaJ family.

It localises to the plastid. The protein localises to the chloroplast thylakoid membrane. Its function is as follows. May help in the organization of the PsaE and PsaF subunits. The polypeptide is Photosystem I reaction center subunit IX (Oltmannsiellopsis viridis (Marine flagellate)).